Reading from the N-terminus, the 1933-residue chain is WD repeat-containing protein 81 (1933 aa).

The necessary and sufficient for the interaction with SQSTM1 stretch occupies residues 1–643 (MAQGSRRRKV…TPCESGWTRE (643 aa)). 6 disordered regions span residues 305-334 (PSEDENQEVSEEKDRTGVKSEKDGEGRPGC), 663-714 (SIPG…GKIV), 1038-1057 (CAFGEEIQMGGQPAASSGLG), 1090-1209 (QPQE…EGKE), 1517-1544 (SLRNPASMEPVTPSAGPEWNPQSGSCLQ), and 1565-1590 (DSQPQSSGPLGSISGVGSGGLSSRNE). Positions 314–330 (SEEKDRTGVKSEKDGEG) are enriched in basic and acidic residues. In terms of domain architecture, BEACH spans 333–610 (GCPTCQKELR…IPRLLVQPIQ (278 aa)). The segment covering 668–693 (AGDQPGSSSSQASPGLLPFSAPSGSR) has biased composition (low complexity). Composition is skewed to polar residues over residues 1100-1112 (GQLSDKSSTSEAS) and 1131-1140 (VKSGDSSQDL). A compositionally biased stretch (acidic residues) spans 1145–1166 (GSEEEEEEEEGCVVLEEEEQDE). 5 WD repeats span residues 1638 to 1677 (GHTGAVKCVAALSSEDFFLSGSKDRTVRLWPLYNYGDGTS), 1684 to 1724 (IYAQ…TLRT), 1776 to 1815 (LNPGLVRSLAVSPSGRSVVAGFSSGFMVLLDTRTGLVLRG), 1818 to 1856 (AHEGDILQIKAVEGSVIVSSSSDHSLTVWKELEQKPTHH), and 1903 to 1933 (NFRGTLTSLALLPTKRHLLLGSDNGIIRLLA).

The protein belongs to the WD repeat WDR81 family. As to quaternary structure, interacts with WDR91; involved in early to late endosome cargo transport. Interacts with BECN1; negatively regulates the PI3 kinase/PI3K activity associated with endosomal membranes. Interacts with SQSTM1; the interaction is direct and regulates the interaction of SQSTM1 with ubiquitinated proteins. Interacts with MAP1LC3C; recruits MAP1LC3C to ubiquitinated protein aggregates in the aggrephagy process.

It is found in the early endosome membrane. It localises to the late endosome membrane. The protein localises to the lysosome membrane. Its subcellular location is the cytoplasmic vesicle. The protein resides in the autophagosome membrane. It is found in the mitochondrion. It localises to the cytoplasm. The protein localises to the cytosol. Its function is as follows. Functions as a negative regulator of the PI3 kinase/PI3K activity associated with endosomal membranes via BECN1, a core subunit of the PI3K complex. By modifying the phosphatidylinositol 3-phosphate/PtdInsP3 content of endosomal membranes may regulate endosome fusion, recycling, sorting and early to late endosome transport. It is for instance, required for the delivery of cargos like BST2/tetherin from early to late endosome and thereby participates indirectly to their degradation by the lysosome. May also play a role in aggrephagy, the macroautophagic degradation of ubiquitinated protein aggregates. In this process, may regulate the interaction of SQSTM1 with ubiquitinated proteins and also recruit MAP1LC3C. May also be involved in maintenance of normal mitochondrial structure and organization. The protein is WD repeat-containing protein 81 of Rattus norvegicus (Rat).